We begin with the raw amino-acid sequence, 201 residues long: Large ribosomal subunit protein uL4 (201 aa).

Residues 46-71 (QKTRAEVVGSGKKPWRQKGTGRARAG) are disordered.

It belongs to the universal ribosomal protein uL4 family. Part of the 50S ribosomal subunit.

Its function is as follows. One of the primary rRNA binding proteins, this protein initially binds near the 5'-end of the 23S rRNA. It is important during the early stages of 50S assembly. It makes multiple contacts with different domains of the 23S rRNA in the assembled 50S subunit and ribosome. In terms of biological role, forms part of the polypeptide exit tunnel. In Shewanella woodyi (strain ATCC 51908 / MS32), this protein is Large ribosomal subunit protein uL4.